Consider the following 342-residue polypeptide: Pre-mRNA-splicing factor 18 (342 aa).

At M1 the chain carries N-acetylmethionine.

Belongs to the PRP18 family. In terms of assembly, heterodimer with PPIH. Interacts with PRPF4 and with the spliceosome. Part of a complex containing U4/U6 snRNPs.

It is found in the nucleus speckle. Functionally, participates in the second step of pre-mRNA splicing. This Bos taurus (Bovine) protein is Pre-mRNA-splicing factor 18 (PRPF18).